Here is a 290-residue protein sequence, read N- to C-terminus: tRNA(Ile)-lysidine synthase, chloroplastic (290 aa).

Position 33-38 (33-38 (SGGQDS)) interacts with ATP.

The protein belongs to the tRNA(Ile)-lysidine synthase family.

The protein localises to the plastid. It is found in the chloroplast. The enzyme catalyses cytidine(34) in tRNA(Ile2) + L-lysine + ATP = lysidine(34) in tRNA(Ile2) + AMP + diphosphate + H(+). Ligates lysine onto the cytidine present at position 34 of the AUA codon-specific tRNA(Ile) that contains the anticodon CAU, in an ATP-dependent manner. Cytidine is converted to lysidine, thus changing the amino acid specificity of the tRNA from methionine to isoleucine. This chain is tRNA(Ile)-lysidine synthase, chloroplastic, found in Cyanidioschyzon merolae (strain NIES-3377 / 10D) (Unicellular red alga).